Consider the following 79-residue polypeptide: Probable [Fe-S]-dependent transcriptional repressor (79 aa).

C56, C61, C64, and C70 together coordinate iron-sulfur cluster.

It belongs to the FeoC family.

Its function is as follows. May function as a transcriptional regulator that controls feoABC expression. This Serratia proteamaculans (strain 568) protein is Probable [Fe-S]-dependent transcriptional repressor.